Here is a 477-residue protein sequence, read N- to C-terminus: Sulfate adenylyltransferase subunit 1 (477 aa).

Positions 22–239 (KDMLRFITCG…TVQISHDAPL (218 aa)) constitute a tr-type G domain. The segment at 31–38 (GSVDDGKS) is G1. 31–38 (GSVDDGKS) contributes to the GTP binding site. The G2 stretch occupies residues 89-93 (GITID). A G3 region spans residues 110–113 (DCPG). GTP contacts are provided by residues 110 to 114 (DCPGH) and 165 to 168 (NKMD). A G4 region spans residues 165-168 (NKMD). Positions 202-204 (SAL) are G5.

The protein belongs to the TRAFAC class translation factor GTPase superfamily. Classic translation factor GTPase family. CysN/NodQ subfamily. As to quaternary structure, heterodimer composed of CysD, the smaller subunit, and CysN.

It catalyses the reaction sulfate + ATP + H(+) = adenosine 5'-phosphosulfate + diphosphate. Its pathway is sulfur metabolism; hydrogen sulfide biosynthesis; sulfite from sulfate: step 1/3. With CysD forms the ATP sulfurylase (ATPS) that catalyzes the adenylation of sulfate producing adenosine 5'-phosphosulfate (APS) and diphosphate, the first enzymatic step in sulfur assimilation pathway. APS synthesis involves the formation of a high-energy phosphoric-sulfuric acid anhydride bond driven by GTP hydrolysis by CysN coupled to ATP hydrolysis by CysD. This Chromobacterium violaceum (strain ATCC 12472 / DSM 30191 / JCM 1249 / CCUG 213 / NBRC 12614 / NCIMB 9131 / NCTC 9757 / MK) protein is Sulfate adenylyltransferase subunit 1.